A 397-amino-acid polypeptide reads, in one-letter code: Lysophospholipid transporter LplT (397 aa).

At 1–17 (MSESVHTNTSLWSKGMK) the chain is on the periplasmic side. A helical transmembrane segment spans residues 18–38 (AVIVAQFLSAFGDNALLFATL). Residues 39-52 (ALLKAQFYPEWSQP) lie on the Cytoplasmic side of the membrane. Residues 53–73 (ILQMVFVGAYILFAPFVGQVA) traverse the membrane as a helical segment. At 74 to 90 (DSFAKGRVMMFANGLKL) the chain is on the periplasmic side. The helical transmembrane segment at 91–111 (LGAASICFGINPFLGYTLVGV) threads the bilayer. Over 112–144 (GAAAYSPAKYGILGELTTGSKLVKANGLMEAST) the chain is Cytoplasmic. The helical transmembrane segment at 145 to 165 (IAAILLGSVAGGVLADWHVLV) threads the bilayer. A topological domain (periplasmic) is located at residue alanine 166. The chain crosses the membrane as a helical span at residues 167–187 (LAACALAYGGAVVANIYIPKL). At 188-226 (AAARPGQSWNLINMTRSFLNACTSLWRNGETRFSLVGTS) the chain is on the cytoplasmic side. A helical transmembrane segment spans residues 227–247 (LFWGAGVTLRFLLVLWVPVAL). The Periplasmic portion of the chain corresponds to 248–256 (GITDNATPT). The chain crosses the membrane as a helical span at residues 257–277 (YLNAMVAIGIVVGAGAAAKLV). The Cytoplasmic portion of the chain corresponds to 278 to 280 (TLE). Residues 281–301 (TVSRCMPAGILIGVVVLIFSL) form a helical membrane-spanning segment. The Periplasmic segment spans residues 302 to 304 (QHE). Residues 305–325 (LLPAYALLMLIGVMGGFFVVP) form a helical membrane-spanning segment. The Cytoplasmic segment spans residues 326-343 (LNALLQERGKKSVGAGNA). The helical transmembrane segment at 344–364 (IAVQNLGENSAMLLMLGIYSL) threads the bilayer. The Periplasmic segment spans residues 365 to 366 (AV). The helical transmembrane segment at 367-387 (MIGIPVVPIGIGFGALFALAI) threads the bilayer. The Cytoplasmic portion of the chain corresponds to 388–397 (TALWIWQRRH).

This sequence belongs to the major facilitator superfamily. LplT (TC 2.A.1.42) family.

The protein localises to the cell inner membrane. Catalyzes the facilitated diffusion of 2-acyl-glycero-3-phosphoethanolamine (2-acyl-GPE) into the cell. This is Lysophospholipid transporter LplT from Escherichia coli O8 (strain IAI1).